Consider the following 191-residue polypeptide: Large ribosomal subunit protein bL25 (191 aa).

This sequence belongs to the bacterial ribosomal protein bL25 family. CTC subfamily. As to quaternary structure, part of the 50S ribosomal subunit; part of the 5S rRNA/L5/L18/L25 subcomplex. Contacts the 5S rRNA. Binds to the 5S rRNA independently of L5 and L18.

In terms of biological role, this is one of the proteins that binds to the 5S RNA in the ribosome where it forms part of the central protuberance. The chain is Large ribosomal subunit protein bL25 from Nitratidesulfovibrio vulgaris (strain DSM 19637 / Miyazaki F) (Desulfovibrio vulgaris).